Here is a 491-residue protein sequence, read N- to C-terminus: MNTQQLAKLRSIVPEMRRVRHIHFVGIGGAGMGGIAEVLANEGYQISGSDLAPNPVTQQLTSLGATIFFNHRPENVRDASVVVVSSAISADNPEIVAAHEARIPVIRRAEMLAELMRFRHGIAIAGTHGKTTTTAMVSSIYAEAGLDPTFVNGGLVKAAGVHARLGHSRYLIAEADESDASFLHLQPMVAIVTNIEADHMDTYHGDFENLKQTFINFLHNLPFYGRAVMCVDDPVIRELLPRVGRQTTTYGFSEDADVRVEDYQQIGPQGHFTLLRQGMPDLHVTLNAPGRHNALNAAAAVAVATEEGIDDDAILRALESFQGTGRRFDFLGEFPLEPVNGKAGTAMLVDDYGHHPTEVDATIKAARAGWPDKNLVMLFQPHRYTRTRDLYDDFANVLTQVDALLMLDVYPAGEAPTPGADSRSLCRTIRNRGKIDPILVSDPAQVATMLAPVLTGNDLILVQGAGNVGKIARYLSEIKLKPQIQEEEQHG.

Residue 126–132 (GTHGKTT) coordinates ATP.

The protein belongs to the MurCDEF family.

It localises to the cytoplasm. The catalysed reaction is UDP-N-acetyl-alpha-D-muramate + L-alanine + ATP = UDP-N-acetyl-alpha-D-muramoyl-L-alanine + ADP + phosphate + H(+). It functions in the pathway cell wall biogenesis; peptidoglycan biosynthesis. Its function is as follows. Cell wall formation. The polypeptide is UDP-N-acetylmuramate--L-alanine ligase (Salmonella gallinarum (strain 287/91 / NCTC 13346)).